The chain runs to 100 residues: MAKKSLIERNKKRQRLVEKYFHLRQSLKKEMNQTLSVEEKWIFYKKLQALPRNSAGTRIKNICFITGRSKAYYRDFGISRHTFREMAHACLLPGLTKSSW.

This sequence belongs to the universal ribosomal protein uS14 family. As to quaternary structure, part of the 30S ribosomal subunit.

It localises to the plastid. The protein resides in the chloroplast. Binds 16S rRNA, required for the assembly of 30S particles. This Chara vulgaris (Common stonewort) protein is Small ribosomal subunit protein uS14c.